We begin with the raw amino-acid sequence, 162 residues long: Ribonuclease H (162 aa).

The region spanning 1–141 (MKRIEIFTDG…ADALARAGMA (141 aa)) is the RNase H type-1 domain. Mg(2+)-binding residues include Asp-9, Glu-47, Asp-69, and Asp-133. Residues 139–162 (GMAPFKKKKGGDTASSEEGSARRR) are disordered.

Belongs to the RNase H family. As to quaternary structure, monomer. Requires Mg(2+) as cofactor.

It is found in the cytoplasm. It catalyses the reaction Endonucleolytic cleavage to 5'-phosphomonoester.. Endonuclease that specifically degrades the RNA of RNA-DNA hybrids. This Chelativorans sp. (strain BNC1) protein is Ribonuclease H.